Reading from the N-terminus, the 365-residue chain is uncharacterized protein (365 aa).

Residues 18 to 46 (TAQEALTLIEKLDSDYKEKEEKITALSVH) are a coiled coil.

This is an uncharacterized protein from Bacillus subtilis (strain 168).